Consider the following 420-residue polypeptide: Diaminobutyrate--2-oxoglutarate transaminase (420 aa).

An N6-(pyridoxal phosphate)lysine modification is found at lysine 271.

Belongs to the class-III pyridoxal-phosphate-dependent aminotransferase family. Requires pyridoxal 5'-phosphate as cofactor.

The enzyme catalyses L-2,4-diaminobutanoate + 2-oxoglutarate = L-aspartate 4-semialdehyde + L-glutamate. The protein operates within amine and polyamine biosynthesis; ectoine biosynthesis; L-ectoine from L-aspartate 4-semialdehyde: step 1/3. Catalyzes reversively the conversion of L-aspartate beta-semialdehyde (ASA) to L-2,4-diaminobutyrate (DABA) by transamination with L-glutamate. The chain is Diaminobutyrate--2-oxoglutarate transaminase (ectB) from Streptomyces anulatus (Streptomyces chrysomallus).